The chain runs to 149 residues: Probable flagellum biosynthesis repressor protein FlbT (149 aa).

It belongs to the FlbT family.

In terms of biological role, has a post-transcriptional repressor function in flagellum biogenesis. Associates with the 5'-UTR of fljK mRNA and promotes its degradation. The chain is Probable flagellum biosynthesis repressor protein FlbT from Rhizobium etli (strain CIAT 652).